The chain runs to 206 residues: MAPSHLSVREMREDEKPLVLEMLKAGVKDTENRVALHALTRPPALLLLAAASSGLRFVLASFALALLLPVFLAVAAMKLGLRARWGSLPPPGGLGGPWVAVRGSGDVCGVLALAPGSSAGDGARVTRLSVSRWHRRRGVGRRLLAFAESRARAWAGGMGEPRARLVVPVAVAAWGVAGMLEGCGYQAEGSWGCMGYTLVREFSKEL.

The N-acetyltransferase domain maps to 55-206; that stretch reads LRFVLASFAL…TLVREFSKEL (152 aa). The helical transmembrane segment at 57–77 threads the bilayer; sequence FVLASFALALLLPVFLAVAAM.

The protein belongs to the camello family.

It is found in the membrane. Functionally, probable acetyltransferase. Its function is as follows. May act as a transcription factor regulating the expression of coproporphyrinogen oxidase by binding to a promoter regulatory element. The polypeptide is Probable N-acetyltransferase 14 (Bos taurus (Bovine)).